The sequence spans 997 residues: MADSGDKSQGMRPPPFDSRGHPLPRRASPDKSITLHNHRLARDASSRVISSSALGVTGPQPQPTSSPTRRDSSGESNDTGQSDPKSWFDQSNRNPVAAFNDESNIMEVDPPFYQKETDSSNEDSRYPPGRNPSYPPRDTQTQGFRATVAHSSSADDFRSVIDDLTVENKRLKEELKRYKQFGSDMMRKEKLFEIKVHGLPRRKKRELEATLREFAASLGDSSESTSQRRKAGRHGKAVHSSGVSLSKHDSSSSSRSRPVDSAYASMSTGRSSHAAHSSGPSLGRPSLSSKSTSSQKVESYLRDTPDGLLPHHVVMTDKEKKKLVVRRLEQLFTGKISGRNMQRIPSIPSMDAALVSEGTIMAPPRPPPEGSREACIQLQEGENPEKIRSSKGATSASNSGGDQTEVGGTVTAGGDGNGSGGRTVNNTSPPGVIAPDQRPTRPRDLDPDRVQIPSENMDYIRHLGLVSPEFLQGSRTSYQDVAPDAEGWVYLNLLCNLAQLHMINVTPSFIRQAVSEKSTKFQLSSDGRKIRWRGGTDGTKFSSDNGEDKSQKSPLTDDTEDGSDKTGRRKKQKTQQARSEIGRLGLSRSPSDTFHYKPMFVHCHASSAETSLEESASQGSEDFVDESNLANSKWDFSGSGTTQQRRKRRYDGAIVYYTGAQFCTDLSGEPGDMSPTEQMTATGEQEASGSGDEAGRVLQRTLSGSSLLVRPLSDDRARVAEALDFDPQNPPDLVSDDGFSPNDEDFVFPWCEDPAKTQVQPLAKEVMGRSGLGGVLPDDHFAIFVTTRRVMRPTLQRHLSRSTTSEDTAEIIAERLASIRTSSPLPPPRSRNLILAPLQIEYVAGEFHRLNPASLPPPAMFYPPFSTDSSWDDGDDLVSVEEEVEEMEEESFSEGQMSRRANPHFSDNNTYMRKEDLAFDTETDVRMDSSHDHRMSSDSGLMMRSVMRRPVAVDGDGSPLATVTGRDVDMLHTSSSVATAGGAESGYSSSMEDVSSS.

Disordered regions lie at residues 1 to 153 (MADS…HSSS), 214 to 311 (FAAS…LLPH), 381 to 447 (GENP…DLDP), 524 to 590 (SSDG…SRSP), 665 to 694 (DLSGEPGDMSPTEQMTATGEQEASGSGDEA), 889 to 908 (EESFSEGQMSRRANPHFSDN), and 975 to 997 (SSVATAGGAESGYSSSMEDVSSS). The segment covering 74-94 (GESNDTGQSDPKSWFDQSNRN) has biased composition (polar residues). A compositionally biased stretch (basic and acidic residues) spans 115–125 (KETDSSNEDSR). The span at 138 to 152 (DTQTQGFRATVAHSS) shows a compositional bias: polar residues. Residues 227-237 (QRRKAGRHGKA) show a composition bias toward basic residues. Low complexity predominate over residues 239–261 (HSSGVSLSKHDSSSSSRSRPVDS). Positions 264–275 (ASMSTGRSSHAA) are enriched in polar residues. The segment covering 277–294 (SSGPSLGRPSLSSKSTSS) has biased composition (low complexity). Residues 391–402 (KGATSASNSGGD) show a composition bias toward polar residues. Over residues 410–421 (VTAGGDGNGSGG) the composition is skewed to gly residues. The segment covering 438–447 (RPTRPRDLDP) has biased composition (basic and acidic residues). The short motif at 569–573 (RKKQK) is the Nuclear localization signal element. Polar residues predominate over residues 675–688 (PTEQMTATGEQEAS). Polar residues predominate over residues 986 to 997 (GYSSSMEDVSSS).

This sequence belongs to the FRQ family.

It is found in the nucleus. Circadian clock component involved in the generation of biological rhythms, in particular in rhythm stability, period length, and temperature compensation. Behaves as a negative element in circadian transcriptional loop. The polypeptide is Frequency clock protein (FRQ) (Sordaria fimicola).